We begin with the raw amino-acid sequence, 426 residues long: Neuromedin-U receptor 1 (426 aa).

Topologically, residues 1–65 (MTPLCLNCSV…QTELFMPICA (65 aa)) are extracellular. 3 N-linked (GlcNAc...) asparagine glycosylation sites follow: N7, N27, and N41. A helical membrane pass occupies residues 66 to 86 (TYLLIFVVGAVGNGLTCLVIL). The Cytoplasmic portion of the chain corresponds to 87 to 97 (RHKAMRTPTNY). Residues 98–118 (YLFSLAVSDLLVLLVGLPLEL) form a helical membrane-spanning segment. Residues 119–138 (YEMWHNYPFLLGVGGCYFRT) are Extracellular-facing. Residues C134 and C219 are joined by a disulfide bond. A helical membrane pass occupies residues 139–161 (LLFEMVCLASVLNVTALSVERYV). At 162-181 (AVVHPLQARSMVTRAHVRRV) the chain is on the cytoplasmic side. The helical transmembrane segment at 182–202 (LGAVWGLAMLCSLPNTSLHGI) threads the bilayer. The Extracellular portion of the chain corresponds to 203-235 (RQLHVPCRGPVPDSAVCMLVRPRALYNMVVQTT). Residues 236 to 256 (ALLFFCLPMAIMSVLYLLIGL) form a helical membrane-spanning segment. The Cytoplasmic portion of the chain corresponds to 257 to 294 (RLRRERLLLMQEAKGRGSAAARSRYTCRLQQHDRGRRQ). The helical transmembrane segment at 295–315 (VTKMLFVLVVVFGICWAPFHA) threads the bilayer. Residues 316–338 (DRVMWSVVSQWTDGLHLAFQHVH) are Extracellular-facing. A helical transmembrane segment spans residues 339 to 359 (VISGIFFYLGSAANPVLYSLM). At 360-426 (SSRFRETFQE…PEAQQETDPS (67 aa)) the chain is on the cytoplasmic side.

The protein belongs to the G-protein coupled receptor 1 family. As to expression, expressed in greatest abundance in peripheral organs, particularly in elements of the gastrointestinal and urogenital systems with highest levels in testes. In central nervous system structures express levels are much lower than those seen in peripheral organs. Within the CNS, has been detected in highest abundance in the cerebellum, dorsal root ganglia, hippocampus, and spinal cord.

It is found in the cell membrane. Its function is as follows. Receptor for the neuromedin-U and neuromedin-S neuropeptides. The chain is Neuromedin-U receptor 1 (NMUR1) from Homo sapiens (Human).